An 83-amino-acid chain; its full sequence is Beta-toxin Ct25 (83 aa).

The N-terminal stretch at 1–18 (MKVLILIIASVLLIGVEC) is a signal peptide. The LCN-type CS-alpha/beta domain maps to 19-81 (KDGYPKNSEG…VWDSATNKCG (63 aa)). 4 disulfide bridges follow: Cys-29/Cys-80, Cys-33/Cys-54, Cys-40/Cys-61, and Cys-44/Cys-63. Gly-81 bears the Glycine amide mark.

The protein belongs to the long (4 C-C) scorpion toxin superfamily. Sodium channel inhibitor family. Beta subfamily. Expressed by the venom gland.

The protein resides in the secreted. Beta toxins bind voltage-independently at site-4 of sodium channels (Nav) and shift the voltage of activation toward more negative potentials thereby affecting sodium channel activation and promoting spontaneous and repetitive firing. This Centruroides tecomanus (Scorpion) protein is Beta-toxin Ct25.